A 76-amino-acid polypeptide reads, in one-letter code: Envelope small membrane protein (76 aa).

Residues 1–16 (MYSFVSEETGTLIVNS) lie on the Virion surface side of the membrane. Residues 17 to 37 (VLLFFAFVVFLLVTLAILTAL) traverse the membrane as a helical segment. Over 38-76 (RLCAYCCNIVNVSLVKPTVYVYSRVKNLNSSEGVPDLLV) the chain is Intravirion.

Belongs to the betacoronaviruses E protein family. As to quaternary structure, homopentamer. Interacts with membrane protein M in the budding compartment of the host cell, which is located between endoplasmic reticulum and the Golgi complex. Interacts with Nucleoprotein.

The protein localises to the host Golgi apparatus membrane. Functionally, plays a central role in virus morphogenesis and assembly. Acts as a viroporin and self-assembles in host membranes forming pentameric protein-lipid pores that allow ion transport. Also plays a role in the induction of apoptosis. This Rhinolophus macrotis (Big-eared horseshoe bat) protein is Envelope small membrane protein.